Reading from the N-terminus, the 103-residue chain is MKKESLIFVSLFTAVISCCILFVSFAGKIEERKQYVKIEVQEGDTLWELADRIKGGKTADKHKFIEWVADKNNLPTSVIKPGDVLILPVAKQHSDQYQLAVVE.

A LysM domain is found at 36–87; it reads VKIEVQEGDTLWELADRIKGGKTADKHKFIEWVADKNNLPTSVIKPGDVLIL.

This sequence belongs to the YneA family.

Its subcellular location is the cytoplasm. Its function is as follows. Inhibits cell division during the SOS response. Affects a later stage of the cell division protein assembly, after the assembly of the Z ring, by probably suppressing recruitment of FtsL and/or DivIC to the division machinery. This Bacillus licheniformis (strain ATCC 14580 / DSM 13 / JCM 2505 / CCUG 7422 / NBRC 12200 / NCIMB 9375 / NCTC 10341 / NRRL NRS-1264 / Gibson 46) protein is Cell division suppressor protein YneA.